Here is a 366-residue protein sequence, read N- to C-terminus: Zinc finger protein ubi-d4 B (366 aa).

Disordered stretches follow at residues 41–94 (ASAP…DGSS) and 140–167 (DDLD…IGGA). A compositionally biased stretch (basic and acidic residues) spans 76–86 (PDPEQMLKKEG). Positions 140 to 149 (DDLDDEDYEE) are enriched in acidic residues. The C2H2-type zinc finger occupies 183 to 206 (YACDICGKRYKNRPGLSYHYAHSH). A disordered region spans residues 211–243 (EGAGAEDKEDSQPPTPIMHRSEEQKSKKGPDGL). Positions 229 to 240 (HRSEEQKSKKGP) are enriched in basic and acidic residues. 2 consecutive PHD-type zinc fingers follow at residues 247–307 (NNYC…CKCC) and 304–354 (CKCC…CLDL).

Belongs to the requiem/DPF family.

The protein localises to the cytoplasm. It localises to the nucleus. Functionally, may be a transcription factor required for the apoptosis response following survival factor withdrawal from myeloid cells. Might also have a role in the development and maturation of lymphoid cells. The sequence is that of Zinc finger protein ubi-d4 B (req-b) from Xenopus laevis (African clawed frog).